Reading from the N-terminus, the 176-residue chain is Large ribosomal subunit protein uL6 (176 aa).

Belongs to the universal ribosomal protein uL6 family. Part of the 50S ribosomal subunit.

This protein binds to the 23S rRNA, and is important in its secondary structure. It is located near the subunit interface in the base of the L7/L12 stalk, and near the tRNA binding site of the peptidyltransferase center. The polypeptide is Large ribosomal subunit protein uL6 (Burkholderia ambifaria (strain MC40-6)).